The chain runs to 1637 residues: Stress response protein NST1 (1637 aa).

The segment covering 1–17 (MSNRGNLNLNLPPSSGK) has biased composition (polar residues). Disordered stretches follow at residues 1–155 (MSNR…EITN), 221–252 (HQASNNNHIHNHSHTSSHPLQHTPNHLHHASH), 442–494 (LKMN…SQQL), 504–523 (KNNLQQNHHTHHHHQQPLQH), 681–734 (KTPY…EIDD), 746–825 (QHHH…EEEK), 871–1036 (AKRE…SKHV), 1049–1075 (SKQNQAQNGNQSHLPPQSRLRQDEENP), 1176–1299 (NSSQ…GAII), and 1512–1534 (YTQQQQQQQQPQPQPQSQQQYPL). The span at 24–33 (VHFELSKEKN) shows a compositional bias: basic and acidic residues. 2 stretches are compositionally biased toward low complexity: residues 34-53 (NSTNSNPHTSSTSTSNSNNT) and 64-113 (NDNN…QQQS). A compositionally biased stretch (basic residues) spans 124–134 (AKKRKKKKSKK). Low complexity predominate over residues 135–155 (SSNNNGNNSNTNSNSNSEITN). Residues 446 to 470 (QRQQSQSQSQSQSQQQRDVQTAQSQ) are compositionally biased toward low complexity. Residues 471–487 (VLSKDSSLKNANTSMNK) show a composition bias toward polar residues. A compositionally biased stretch (polar residues) spans 692-706 (PAATSQDREQQVQPN). The segment covering 717–734 (DHEHEHEHEHEHEHEIDD) has biased composition (basic and acidic residues). Acidic residues predominate over residues 754 to 808 (EEYDEEDEEDDEEYEYGDDEEEEDEEDEEEGEDEELEEVVEDDVDEEILDDEEEF). Residues 855–1023 (KDNTRKLFEE…KQLEKEAAVS (169 aa)) are a coiled coil. 2 stretches are compositionally biased toward basic and acidic residues: residues 871-887 (AKREKEAKKLKQKEKAK) and 896-1021 (AKEE…KEAA). Residues 1049-1063 (SKQNQAQNGNQSHLP) show a composition bias toward polar residues. The segment covering 1176–1199 (NSSQGSPWTTNSTLSSNLGSTGLS) has biased composition (low complexity). Residues 1201–1228 (GQGQTVSGVNTNLPSSIGITSGGASQIF) show a composition bias toward polar residues. Positions 1234-1257 (PQLQPHQPQQQQQQQQQQQQQQQQ) are enriched in low complexity. Over residues 1258 to 1267 (NYFSPFNSFS) the composition is skewed to polar residues. Composition is skewed to low complexity over residues 1282–1299 (TTNINNSTTASSSTGAII) and 1514–1534 (QQQQQQQQPQPQPQSQQQYPL).

Belongs to the NST1 family.

The protein localises to the cytoplasm. Functionally, may act as a negative regulator of salt tolerance. In Lodderomyces elongisporus (strain ATCC 11503 / CBS 2605 / JCM 1781 / NBRC 1676 / NRRL YB-4239) (Yeast), this protein is Stress response protein NST1 (NST1).